We begin with the raw amino-acid sequence, 218 residues long: Ribose-5-phosphate isomerase A (218 aa).

Substrate contacts are provided by residues 28-31, 81-84, and 94-97; these read TGST, DGAD, and KGGG. Catalysis depends on Glu-103, which acts as the Proton acceptor. Lys-121 is a substrate binding site.

This sequence belongs to the ribose 5-phosphate isomerase family. Homodimer.

It catalyses the reaction aldehydo-D-ribose 5-phosphate = D-ribulose 5-phosphate. It participates in carbohydrate degradation; pentose phosphate pathway; D-ribose 5-phosphate from D-ribulose 5-phosphate (non-oxidative stage): step 1/1. Functionally, catalyzes the reversible conversion of ribose-5-phosphate to ribulose 5-phosphate. The chain is Ribose-5-phosphate isomerase A from Alcanivorax borkumensis (strain ATCC 700651 / DSM 11573 / NCIMB 13689 / SK2).